Consider the following 406-residue polypeptide: Calsequestrin-2 (406 aa).

The signal sequence occupies residues 1 to 19 (MKATCWILAGFCLLFCCKA). N-linked (GlcNAc...) asparagine glycosylation is present at Asn-335. The disordered stretch occupies residues 365 to 406 (VLSGKINTEDDDDDDDDDDDDDDDDDDDDDDDDDDDDDDDDD). The segment covering 373–406 (EDDDDDDDDDDDDDDDDDDDDDDDDDDDDDDDDD) has biased composition (acidic residues).

Belongs to the calsequestrin family. In terms of tissue distribution, skeletal and heart muscle.

It is found in the sarcoplasmic reticulum lumen. In terms of biological role, calsequestrin is a high-capacity, moderate affinity, calcium-binding protein and thus acts as an internal calcium store in muscle. Calcium ions are bound by clusters of acidic residues at the protein surface, especially at the interface between subunits. Can bind around 60 Ca(2+) ions. Regulates the release of lumenal Ca(2+) via the calcium release channel RYR2; this plays an important role in triggering muscle contraction. Plays a role in excitation-contraction coupling in the heart and in regulating the rate of heart beats. This is Calsequestrin-2 (CASQ2) from Gallus gallus (Chicken).